Reading from the N-terminus, the 470-residue chain is Sugar transporter ESL1 (470 aa).

The Essential for the localization to the vacuole membrane signature appears at 10-16 (LEAGLLL). 12 helical membrane-spanning segments follow: residues 28–48 (ITAVVLFSTFVSVCGSFCFGC), 68–88 (VAQYSMFGSIMTFGGMIGAIF), 99–119 (KGTMWFAQIFCIFGWVAVALA), 130–150 (LSTGFAVGLLSYVIPVYIAEI), 157–177 (GAFVFANQLMQSCGLSLFYVI), 186–206 (LALIGLIPCALQVVTLFFIPE), 268–288 (VVIGVGLMLLQQLSGSSGLMY), 303–323 (IGSMILAVIMIPKALLGLILV), 332–352 (LLASTGGMCFFSLLLSFSFCF), 368–388 (IGVVGFISSFAVGMGGLPWII), 404–424 (LVTLANWSFGWIVAFAYNFML), and 430–450 (GTFLIFFTICGAGIVFIYAMV).

It belongs to the major facilitator superfamily. Sugar transporter (TC 2.A.1.1) family. In terms of tissue distribution, expressed in both shoots and roots. In roots, strongly expressed in pericycle and xylem parenchyma cells, and to a lesser extent in the root endodermis. In flowers, expressed in sepals.

Its subcellular location is the vacuole membrane. It is found in the vesicle. Functionally, sugar transporter. Transports monosaccharides across the vacuolar membrane independently from a proton gradient. May function coordinately with the vacuolar invertase to regulate osmotic pressure by affecting the accumulation of sugar in the cells under abiotic stress conditions. This Arabidopsis thaliana (Mouse-ear cress) protein is Sugar transporter ESL1.